A 209-amino-acid chain; its full sequence is Large ribosomal subunit protein uL4 (209 aa).

Residues 46-71 are disordered; that stretch reads GTSSTKTRSEVRGSSKKPWKQKGTGR. The span at 59–71 shows a compositional bias: basic residues; that stretch reads SSKKPWKQKGTGR.

It belongs to the universal ribosomal protein uL4 family. As to quaternary structure, part of the 50S ribosomal subunit.

Its function is as follows. One of the primary rRNA binding proteins, this protein initially binds near the 5'-end of the 23S rRNA. It is important during the early stages of 50S assembly. It makes multiple contacts with different domains of the 23S rRNA in the assembled 50S subunit and ribosome. Functionally, forms part of the polypeptide exit tunnel. The polypeptide is Large ribosomal subunit protein uL4 (Borrelia garinii subsp. bavariensis (strain ATCC BAA-2496 / DSM 23469 / PBi) (Borreliella bavariensis)).